Reading from the N-terminus, the 105-residue chain is Large ribosomal subunit protein bL21 (105 aa).

The protein belongs to the bacterial ribosomal protein bL21 family. As to quaternary structure, part of the 50S ribosomal subunit. Contacts protein L20.

In terms of biological role, this protein binds to 23S rRNA in the presence of protein L20. In Porphyromonas gingivalis (strain ATCC BAA-308 / W83), this protein is Large ribosomal subunit protein bL21.